Here is a 404-residue protein sequence, read N- to C-terminus: Tryptophan synthase beta chain (404 aa).

Lys-98 is modified (N6-(pyridoxal phosphate)lysine).

Belongs to the TrpB family. As to quaternary structure, tetramer of two alpha and two beta chains. Pyridoxal 5'-phosphate serves as cofactor.

It catalyses the reaction (1S,2R)-1-C-(indol-3-yl)glycerol 3-phosphate + L-serine = D-glyceraldehyde 3-phosphate + L-tryptophan + H2O. Its pathway is amino-acid biosynthesis; L-tryptophan biosynthesis; L-tryptophan from chorismate: step 5/5. The beta subunit is responsible for the synthesis of L-tryptophan from indole and L-serine. This chain is Tryptophan synthase beta chain, found in Rhodopseudomonas palustris (strain ATCC BAA-98 / CGA009).